A 571-amino-acid polypeptide reads, in one-letter code: MSHQPLSCLTEKGDSPSESTGNGPPHLAHPNLDTFTPEELLQQMKELLTENHQLKEAMKLNNQAMKGRFEELSAWTEKQKEERQFFETQSKEAKERLMALSHENEKLKEELGKLKGKSERSSEDPTGDSRLPRAEAEQEKDQLRTQVTRLQAEKADLLGIVSELQLKLNSSGSSEDSFVEIRMAEGEAEGSVKEIKHSPGPTRTVSIGTSRSAEGAKNYLEHEELTVSQLLLCLREGNQKVERLEIALKEAKERVSDFEKKASNRSEIETQTEGSTEKENEEEKGPETVGSEVEALNLQVTSLFKELQEAHTKLSEAELMKKRLQEKCQALERKNSATPSELNEKQELVYTNKKLELQVESMLSEIKMEQAKTEDEKSKLAMLQLTHNKLLQEHNHALKTIEELTRKESEKVDRAVLKELSEKLELAEKALASKQLQMDEMKQTIAKQEEDLETMTVLRAQMEVYCSDFHAERAAREKIHEEKEQLALQLAVLLKENDAFEDGGRQSLMEMQSRHGARTSDPDQQAYLVQRGTEDRDWQQQRNIPIHSCPKCGEVLPDIDTLQIHVMDCII.

Disordered stretches follow at residues 1–32 and 100–144; these read MSHQ…HPNL and LSHE…DQLR. Positions 38–170 form a coiled coil; the sequence is EELLQQMKEL…VSELQLKLNS (133 aa). Positions 58 to 209 are interaction with Rab8; it reads MKLNNQAMKG…GPTRTVSIGT (152 aa). Composition is skewed to basic and acidic residues over residues 100–123 and 130–143; these read LSHE…RSSE and RLPR…KDQL. The LIR motif lies at 176–181; sequence DSFVEI. The residue at position 177 (Ser-177) is a Phosphoserine; by TBK1. A compositionally biased stretch (basic and acidic residues) spans 186–197; the sequence is GEAEGSVKEIKH. Disordered regions lie at residues 186–210 and 255–291; these read GEAE…IGTS and VSDF…TVGS. Phosphoserine is present on Ser-198. Polar residues predominate over residues 201 to 210; that stretch reads PTRTVSIGTS. A coiled-coil region spans residues 233 to 502; it reads CLREGNQKVE…LLKENDAFED (270 aa). Basic and acidic residues-rich tracts occupy residues 255–268 and 275–286; these read VSDF…RSEI and STEKENEEEKGP. At Ser-336 the chain carries Phosphoserine. The segment at 405-571 is interaction with HD; sequence TRKESEKVDR…LQIHVMDCII (167 aa). An interaction with MYO6 region spans residues 406–514; the sequence is RKESEKVDRA…RQSLMEMQSR (109 aa). The short motif at 468–473 is the UBAN element; that stretch reads DFHAER. Ser-520 bears the Phosphoserine mark. A CCHC NOA-type zinc finger spans residues 541 to 571; it reads QRNIPIHSCPKCGEVLPDIDTLQIHVMDCII. Residues Cys-549, Cys-552, His-565, and Cys-569 each contribute to the Zn(2+) site.

In terms of assembly, self-associates. Interacts with HD. Interacts with GTF3A. Interacts with MYO6. Interacts (via UBAN) with ubiquitinated TFRC. Interacts with GTP-bound Rab8 (RAB8A and/or RAB8B). Interacts with TBC1D17. Interacts with TBK1. Interacts with TRAF3. Binds to linear ubiquitin chains. Interacts with LC3 family members MAP1LC3A, MAP1LC3B, GABARAP, GABARAPL1 and GABARAPL2; OPTN phosphorylation increases the association (at least with MAP1LC3B). Interacts with RAB12; the interaction may be indirect. Interacts with TBK1; this interaction leads to the Golgi localization of TBK1 and its subsequent activation. Interacts with palmitoyltransferase ZDHHC17/HIP14; the interaction does not lead to palmitoylation of OPTN. Interacts with CYLD. Interacts with TOM1; the interaction is indirect and is mediated by MYO6, which acts as a bridge between TOM1 and OPTN. Interacts with USP12; the interaction is independent of USP12 deubiquitinase activity and may be involved in regulation of autophagic flux. Post-translationally, phosphorylated by TBK1, leading to restrict bacterial proliferation in case of infection.

It localises to the cytoplasm. Its subcellular location is the perinuclear region. It is found in the golgi apparatus. The protein localises to the trans-Golgi network. The protein resides in the cytoplasmic vesicle. It localises to the autophagosome. Its subcellular location is the recycling endosome. In terms of biological role, plays an important role in the maintenance of the Golgi complex, in membrane trafficking, in exocytosis, through its interaction with myosin VI and Rab8. Links myosin VI to the Golgi complex and plays an important role in Golgi ribbon formation. Negatively regulates the induction of IFNB in response to RNA virus infection. Plays a neuroprotective role in the eye and optic nerve. Probably part of the TNF-alpha signaling pathway that can shift the equilibrium toward induction of cell death. May act by regulating membrane trafficking and cellular morphogenesis via a complex that contains Rab8 and huntingtin (HD). Mediates the interaction of Rab8 with the probable GTPase-activating protein TBC1D17 during Rab8-mediated endocytic trafficking, such as that of transferrin receptor (TFRC/TfR); regulates Rab8 recruitment to tubules emanating from the endocytic recycling compartment. Autophagy receptor that interacts directly with both the cargo to become degraded and an autophagy modifier of the MAP1 LC3 family; targets ubiquitin-coated bacteria (xenophagy) and appears to function in the same pathway as SQSTM1 and CALCOCO2/NDP52. This chain is Optineurin (OPTN), found in Macaca fascicularis (Crab-eating macaque).